Here is a 341-residue protein sequence, read N- to C-terminus: Adhesion protein Bd37 (341 aa).

Residues methionine 1–glycine 21 form the signal peptide. Asparagine 23 and asparagine 30 each carry an N-linked (GlcNAc...) asparagine glycan. Cysteines 26 and 307 form a disulfide. Residues alanine 36–glutamate 75 are disordered. Positions alanine 49–alanine 59 are enriched in low complexity. Polar residues predominate over residues asparagine 60–glutamate 75. Serine 311 is lipidated: GPI-anchor amidated serine. A propeptide spans glycine 312–phenylalanine 341 (removed in mature form).

The signal sequence is cleaved. In terms of processing, glycosylated. Post-translationally, palmitoylated. Not myristoylated.

The protein localises to the cell membrane. Its subcellular location is the secreted. It localises to the vesicle. Its function is as follows. Binds to host erythrocytes. This is Adhesion protein Bd37 from Babesia divergens.